We begin with the raw amino-acid sequence, 215 residues long: Glycerol-3-phosphate acyltransferase (215 aa).

Helical transmembrane passes span 3–23 (LILL…LWIG), 42–61 (TNTF…LIDI), 68–90 (TLLP…FAVL), 110–130 (AGVL…VFVL), 134–154 (LFSM…ISVL), and 162–182 (LLPG…AIII).

Belongs to the PlsY family. Probably interacts with PlsX.

It localises to the cell membrane. The catalysed reaction is an acyl phosphate + sn-glycerol 3-phosphate = a 1-acyl-sn-glycero-3-phosphate + phosphate. Its pathway is lipid metabolism; phospholipid metabolism. Its function is as follows. Catalyzes the transfer of an acyl group from acyl-phosphate (acyl-PO(4)) to glycerol-3-phosphate (G3P) to form lysophosphatidic acid (LPA). This enzyme utilizes acyl-phosphate as fatty acyl donor, but not acyl-CoA or acyl-ACP. In Streptococcus equi subsp. zooepidemicus (strain H70), this protein is Glycerol-3-phosphate acyltransferase.